The following is a 256-amino-acid chain: Alcohol dehydrogenase (256 aa).

Residue 12–35 (FVAGLGGIGLDTSKELVKRDLKNL) participates in NAD(+) binding. Serine 140 lines the substrate pocket. Catalysis depends on tyrosine 153, which acts as the Proton acceptor.

The protein belongs to the short-chain dehydrogenases/reductases (SDR) family. In terms of assembly, homodimer.

It catalyses the reaction a primary alcohol + NAD(+) = an aldehyde + NADH + H(+). The enzyme catalyses a secondary alcohol + NAD(+) = a ketone + NADH + H(+). The chain is Alcohol dehydrogenase (Adh) from Drosophila orena (Fruit fly).